We begin with the raw amino-acid sequence, 710 residues long: Putative transmembrane protein ORF710 (710 aa).

Residues 1–33 (MKLDRKKKRLLLKTIFSIVILILPLTFLHPTNS) form the signal peptide. Helical transmembrane passes span 41 to 61 (VPIQ…TAPL), 76 to 95 (YGTL…VVWY), and 689 to 709 (VAIV…IFAI).

The protein localises to the host membrane. In Acidianus convivator (ATV), this protein is Putative transmembrane protein ORF710.